We begin with the raw amino-acid sequence, 154 residues long: Large-conductance mechanosensitive channel (154 aa).

The next 2 membrane-spanning stretches (helical) occupy residues 14–34 (VVDLAVGIVIGAAFGAIVNSL) and 86–106 (VFINALINFLILAMAIFFFVV).

The protein belongs to the MscL family. Homopentamer.

The protein resides in the cell membrane. Functionally, channel that opens in response to stretch forces in the membrane lipid bilayer. May participate in the regulation of osmotic pressure changes within the cell. The polypeptide is Large-conductance mechanosensitive channel (Dehalococcoides mccartyi (strain CBDB1)).